The following is a 304-amino-acid chain: E3 ubiquitin-protein ligase BOI (304 aa).

The tract at residues 178–214 (LQERVKSLYVENQIWRDIAQTNEANANTLRTNLDQVL) is WRD domain. The stretch at 197–220 (QTNEANANTLRTNLDQVLAQLETF) forms a coiled coil. The RING-type zinc-finger motif lies at 254–291 (CKRCGEREASVLVLPCRHLCLCTVCGGSALLRTCPVCD).

Interacts with MYB108/BOS1 and the DELLA proteins GAI, RGA, RGL1, RGL2 and RGL3. As to expression, expressed in leaves, siliques, roots, flowering tissues and stigma tips.

It localises to the nucleus. It catalyses the reaction S-ubiquitinyl-[E2 ubiquitin-conjugating enzyme]-L-cysteine + [acceptor protein]-L-lysine = [E2 ubiquitin-conjugating enzyme]-L-cysteine + N(6)-ubiquitinyl-[acceptor protein]-L-lysine.. The protein operates within protein degradation; proteasomal ubiquitin-dependent pathway. E3 ubiquitin-protein ligase involved in the regulation of pathogen and abiotic stress responses by facilitating degradation of MYB108/BOI. Attenuates cell death by preventing caspase activation. Has no effect on the stability of the DELLA proteins. Not regulated by MYB108/BOI. The chain is E3 ubiquitin-protein ligase BOI (BOI) from Arabidopsis thaliana (Mouse-ear cress).